We begin with the raw amino-acid sequence, 81 residues long: Small ribosomal subunit protein bS16 (81 aa).

Belongs to the bacterial ribosomal protein bS16 family.

This Phytoplasma mali (strain AT) protein is Small ribosomal subunit protein bS16.